The primary structure comprises 625 residues: Tumor necrosis factor receptor superfamily member 11A (625 aa).

An N-terminal signal peptide occupies residues 1–30 (MAPRARRRRQLPAPLLALCVLLVPLQVTLQ). The Extracellular portion of the chain corresponds to 31–214 (VTPPCTQERH…PKEAQAYLPS (184 aa)). 9 disulfides stabilise this stretch: cysteine 35–cysteine 47, cysteine 48–cysteine 61, cysteine 51–cysteine 69, cysteine 72–cysteine 87, cysteine 93–cysteine 113, cysteine 115–cysteine 128, cysteine 125–cysteine 127, cysteine 134–cysteine 152, and cysteine 155–cysteine 170. TNFR-Cys repeat units lie at residues 35 to 69 (CTQERHYEHLGRCCSRCEPGKYLSSKCTPTSDSVC), 72 to 113 (CGPD…PRRC), 115 to 152 (CTAGYHWNSDCECCRRNTECAPGFGAQHPLQLNKDTVC), and 155 to 195 (CLLG…DVVC). Asparagine 106 carries N-linked (GlcNAc...) asparagine glycosylation. Cysteine 134, alanine 135, phenylalanine 138, serine 161, and valine 163 together coordinate Na(+). Residue asparagine 175 is glycosylated (N-linked (GlcNAc...) asparagine). The cysteines at positions 176 and 195 are disulfide-linked. The chain crosses the membrane as a helical span at residues 215–234 (LIVLLLFISVVVVAAIIFGV). Over 235–625 (YYRKGGKALT…HTQGSGQCAE (391 aa)) the chain is Cytoplasmic. 3 disordered regions span residues 331–356 (TQGDLSRKIPTEDEYTDRPSQPSTGS), 388–413 (GTESTVDSEGCDFTEPPSRTDSMPVS), and 479–524 (SMAE…FISS). Low complexity predominate over residues 499–511 (SGSSPSDQPPASG). Over residues 512 to 524 (NVTGNSNSTFISS) the composition is skewed to polar residues. The tract at residues 532–537 (GDIIVV) is required for interaction with EEIG1 and osteoclast differentiation. Residues 542-625 (TSQEGPGSAE…HTQGSGQCAE (84 aa)) form a disordered region. Residues 543–558 (SQEGPGSAEPESEPVG) are compositionally biased toward low complexity. A compositionally biased stretch (basic and acidic residues) spans 561-571 (VQEETLAHRDS). Serine 571 bears the Phosphoserine mark. The segment covering 603–625 (RPVQEQGGAQTSLHTQGSGQCAE) has biased composition (polar residues).

Binds to the clefts between the subunits of the TNFSF11 ligand trimer to form a heterohexamer. Part of a complex composed of EEIG1, TNFRSF11A/RANK, PLCG2, GAB2, TEC and BTK; complex formation increases in the presence of TNFSF11/RANKL. Interacts with TRAF1, TRAF2, TRAF3, TRAF5 and TRAF6. Interacts (via cytoplasmic domain) with GAB2. Interacts (via cytoplasmic domain); with EEIG1 (via N-terminus); when in the presence of TNFSF11/RANKL. As to expression, ubiquitous expression with high levels in trabecular bone, thymus, small intestine, lung, brain and kidney. Weakly expressed in spleen and bone marrow.

Its subcellular location is the cell membrane. It is found in the membrane raft. In terms of biological role, receptor for TNFSF11/RANKL/TRANCE/OPGL; essential for RANKL-mediated osteoclastogenesis. Its interaction with EEIG1 promotes osteoclastogenesis via facilitating the transcription of NFATC1 and activation of PLCG2. Involved in the regulation of interactions between T-cells and dendritic cells. This chain is Tumor necrosis factor receptor superfamily member 11A (Tnfrsf11a), found in Mus musculus (Mouse).